Consider the following 465-residue polypeptide: MTVAKTRTETDTFGPIEVAADRYWGAQAQRSLGNFKIGWEKQPASIVRALGVVKRAAAEVNMEMKRLDPVVGKAIVDAAQEVIDGKLNDHFPLVVWQTGSGTQSNMNANEVISNRAIEMLGGVMGSKKPVHPNDHVNMSQSSNDTYPTAMHIACAEQVVHHLIPALHHLHKALDAKARAFNHIIKIGRTHTQDATPLTLGQEFSGYAAQVASSIKRIEMTLPGLQELAQGGTAVGTGLNAPVGFAEKVADRIAAITGIAFVTAPNKFEALAAHDSMVFSHGAINAAAAALFKIANDIRFLGSGPRSGLGELSLPENEPGSSIMPGKVNPTQCEAMTQVCVQVFGNNAALTFAGSQGHFELNVYNPLMAYNFLQSVQLLSDASVSFTDNCVVGIEAREDNIKAALDRSLMLVTALAPTIGYDNAAKIAKTAHKNGTTLREEALATGLVSEVDYDRLVRPEDMTHPG.

Residues 100 to 102 (SGT), 131 to 134 (HPND), 141 to 143 (SSN), and Thr-189 each bind substrate. The Proton donor/acceptor role is filled by His-190. Residue Ser-320 is part of the active site. Substrate-binding positions include Ser-321 and 326–328 (KVN).

It belongs to the class-II fumarase/aspartase family. Fumarase subfamily. As to quaternary structure, homotetramer.

The protein localises to the cytoplasm. The enzyme catalyses (S)-malate = fumarate + H2O. Its pathway is carbohydrate metabolism; tricarboxylic acid cycle; (S)-malate from fumarate: step 1/1. Functionally, involved in the TCA cycle. Catalyzes the stereospecific interconversion of fumarate to L-malate. This is Fumarate hydratase class II from Mesorhizobium japonicum (strain LMG 29417 / CECT 9101 / MAFF 303099) (Mesorhizobium loti (strain MAFF 303099)).